A 200-amino-acid chain; its full sequence is dTTP/UTP pyrophosphatase (200 aa).

Aspartate 81 functions as the Proton acceptor in the catalytic mechanism.

This sequence belongs to the Maf family. YhdE subfamily. Requires a divalent metal cation as cofactor.

It is found in the cytoplasm. It catalyses the reaction dTTP + H2O = dTMP + diphosphate + H(+). The enzyme catalyses UTP + H2O = UMP + diphosphate + H(+). Functionally, nucleoside triphosphate pyrophosphatase that hydrolyzes dTTP and UTP. May have a dual role in cell division arrest and in preventing the incorporation of modified nucleotides into cellular nucleic acids. This chain is dTTP/UTP pyrophosphatase, found in Cupriavidus pinatubonensis (strain JMP 134 / LMG 1197) (Cupriavidus necator (strain JMP 134)).